The primary structure comprises 500 residues: Cytochrome P450 71D7 (500 aa).

Heme is bound at residue Cys-441.

The protein belongs to the cytochrome P450 family. It depends on heme as a cofactor.

This chain is Cytochrome P450 71D7 (CYP71D7), found in Solanum chacoense (Chaco potato).